A 366-amino-acid polypeptide reads, in one-letter code: Inactive protein RESTRICTED TEV MOVEMENT 2 (366 aa).

The region spanning V14–A121 is the sHSP domain. Residues L129–R133 form an A-1 repeat. Positions L129–K220 are 6 X 5 AA repeats A of L-E-E-[SKR]-[ERK]. An A-2 repeat occupies L135–R139. The stretch at L156 to E160 is one A-3 repeat. The stretch at I163–A176 is one B-1 repeat. The tract at residues I163–L206 is 3 X 14 AA repeats B of [IMA]-[RK]-K-L-Q-E-E-A-K-A-K-E-[EK]-[LA]. A B-2 repeat occupies M178–A191. A B-3 repeat occupies A193–K205. Residues L206–K210 form an A-4 repeat. An A-5 repeat occupies L211–R215. One copy of the A-6 repeat lies at L216 to K220. Residues L322 to Y342 form a helical membrane-spanning segment. The segment at C345 to E366 is disordered. The span at S346 to E366 shows a compositional bias: low complexity.

It belongs to the small heat shock protein (HSP20) family.

The protein localises to the cell membrane. Its function is as follows. Seems to not be involved in heat resistance. Unable to mediate restriction of long-distance movement of the pathogenic tobacco etch virus (TEV) without causing a hypersensitive response or inducing systemic acquired resistance. The protein is Inactive protein RESTRICTED TEV MOVEMENT 2 (RTM2) of Arabidopsis thaliana (Mouse-ear cress).